A 314-amino-acid polypeptide reads, in one-letter code: tRNA pseudouridine synthase B (314 aa).

Substrate is bound at residue His-43. The active-site Nucleophile is the Asp-48. Positions 76, 179, and 200 each coordinate substrate.

It belongs to the pseudouridine synthase TruB family. Type 1 subfamily.

The enzyme catalyses uridine(55) in tRNA = pseudouridine(55) in tRNA. Functionally, responsible for synthesis of pseudouridine from uracil-55 in the psi GC loop of transfer RNAs. The sequence is that of tRNA pseudouridine synthase B from Serratia proteamaculans (strain 568).